We begin with the raw amino-acid sequence, 372 residues long: MLVAVVKELKQGEGRVACTPENVRKLTDAGHKVIVEKNAGIGSGFSNDMYEKEGAKIVTHEQAWEADLVIKVKEPHESEYQYFKKNQIIWGFLHLASSKEIVEKMQEVGVTAISGETIIKNGKAELLAPMSAIAGQRSAIMGAYYSEAQHGGQGTLVTGVHENVDIPGSTYVIFGGGVAATNAANVALGLNAKVIIIELNDDRIKYLEDMYAEKDVTVVKSTPENLAEQIKKADVFISTILIPGAKPPKLVTREMVKSMKKGSVLIDIAIDQGGTIETIRPTTISDPVYEEEGVIHYGVPNQPGAVPRTSTMALAQGNIDYILEICDKGLEQAIKDNEALSTGVNIYQGQVTNQGLASSHDLDYKEILNVIE.

Residue His-94 is part of the active site. 170–200 lines the NAD(+) pocket; sequence TYVIFGGGVAATNAANVALGLNAKVIIIELN.

Belongs to the AlaDH/PNT family.

It catalyses the reaction L-alanine + NAD(+) + H2O = pyruvate + NH4(+) + NADH + H(+). Its pathway is amino-acid degradation; L-alanine degradation via dehydrogenase pathway; NH(3) and pyruvate from L-alanine: step 1/1. Its function is as follows. May play a role in cell wall synthesis as L-alanine is an important constituent of the peptidoglycan layer. The protein is Alanine dehydrogenase 1 (ald1) of Staphylococcus aureus (strain USA300).